Reading from the N-terminus, the 752-residue chain is RNA-directed RNA polymerase (752 aa).

Residues 442 to 561 (PVAIGLDASR…FLEQSDLATF (120 aa)) form the RdRp catalytic domain.

It belongs to the tombusviridae RNA polymerase family.

The catalysed reaction is RNA(n) + a ribonucleoside 5'-triphosphate = RNA(n+1) + diphosphate. Functionally, RNA-dependent RNA polymerase that plays an essential role in the virus replication. This chain is RNA-directed RNA polymerase, found in Oat chlorotic stunt virus (isolate United Kingdom) (OCSV).